Consider the following 398-residue polypeptide: MEDDDSYVPSDLTAEERQELENIRRRKQELLADIQRLKEEIAEVANEIESLGSTEERKNMQRNKQVAMGRKKFNMDPKKGIQFLIENGLLKNTCEDIAQFLYKGEGLNKTAIGDYLGERDEFSIQVLHAFVELHEFTDLNLVQALRQFLWSFRLPGEAQKIDRMMEAFAQRYCQCNTGVFQSTDTCYVLSFAIIMLNTSLHNPNVKDKPTVERFIAMNRGINDGGDLPEELLRNLYESIKNEPFKIPEDDGNDLTHTFFNPDREGWLLKLGGGRVKTWKRRWFILTDNCLYYFEYTTDKEPRGIIPLENLSIREVEDSKKPNCFELYIPDNKDQVIKACKTEADGRVVEGNHTVYRISAPTPEEKEDWIKCIKAAISRDPFYEMLAARKKKVSSTKRH.

At Met-1 the chain carries N-acetylmethionine. Positions 1 to 60 are necessary for localization at adherens junction; that stretch reads MEDDDSYVPSDLTAEERQELENIRRRKQELLADIQRLKEEIAEVANEIESLGSTEERKNM. Residues 10 to 67 are a coiled coil; that stretch reads SDLTAEERQELENIRRRKQELLADIQRLKEEIAEVANEIESLGSTEERKNMQRNKQVA. The 130-residue stretch at 73-202 folds into the SEC7 domain; that stretch reads FNMDPKKGIQ…IIMLNTSLHN (130 aa). A PH domain is found at 260–377; sequence NPDREGWLLK…WIKCIKAAIS (118 aa). A 1,2-diacyl-sn-glycero-3-phospho-(1D-myo-inositol-3,4,5-trisphosphate) is bound by residues 269–277, Arg-281, Tyr-292, Arg-302, and Asn-351; that span reads KLGGGRVKT. The C-terminal autoinhibitory region stretch occupies residues 388 to 396; sequence RKKKVSSTK.

Interacts with TRIM23 and CYTIP. Interacts (via coiled-coil domain) with FRMD4A (via coiled-coil domain). Interacts with FRMD4B. Found in a complex with PARD3, CYTH1 and FRMD4A. Interacts (via N-terminal domain) with INAVA (via N-terminal domain). Post-translationally, ubiquitinated by SCF(FBXW11) E3 ubiquitin-protein ligase complex. Ubiquitination induces proteasomal degradation. In terms of tissue distribution, expressed in colon and small intestine (at protein level).

It is found in the cell membrane. The protein resides in the cytoplasm. Its subcellular location is the cytosol. It localises to the cell junction. The protein localises to the tight junction. It is found in the adherens junction. Its function is as follows. Promotes guanine-nucleotide exchange on ARF1, ARF5 and ARF6. Promotes the activation of ARF factors through replacement of GDP with GTP. Plays an important role in membrane trafficking, during junctional remodeling and epithelial polarization, through regulation of ARF6 activity. This is Cytohesin-1 (Cyth1) from Mus musculus (Mouse).